The sequence spans 378 residues: Rhodopsin (378 aa).

At 1–53 (MMSIASGPSHAAYTWASQGGGFGNQTVVDKVPPEMLHMVDAHWYQFPPMNPLW) the chain is on the extracellular side. N-linked (GlcNAc...) asparagine glycosylation occurs at asparagine 24. Residues 54–78 (HALLGFVIGVLGVISVIGNGMVIYI) traverse the membrane as a helical segment. The Cytoplasmic segment spans residues 79–90 (FTTTKSLRTPSN). Residues 91-115 (LLVVNLAISDFLMMLCMSPAMVINC) traverse the membrane as a helical segment. Topologically, residues 116-130 (YYETWVLGPLFCELY) are extracellular. Residues cysteine 127 and cysteine 204 are joined by a disulfide bond. The chain crosses the membrane as a helical span at residues 131 to 150 (GLAGSLFGCASIWTMTMIAF). Residues 151 to 169 (DRYNVIVKGLSAKPMTING) are Cytoplasmic-facing. A helical transmembrane segment spans residues 170 to 193 (ALIRILTIWFFTLAWTIAPMFGWN). Residues 194 to 217 (RYVPEGNMTACGTDYLTKDLFSRS) are Extracellular-facing. Asparagine 200 carries an N-linked (GlcNAc...) asparagine glycan. The helical transmembrane segment at 218-245 (YILIYSIFVYFTPLFLIIYSYFFIIQAV) threads the bilayer. The Cytoplasmic segment spans residues 246–280 (AAHEKNMREQAKKMNVASLRSAENQSTSAECKLAK). Residues 281 to 304 (VALMTISLWFMAWTPYLVINYSGI) form a helical membrane-spanning segment. At 305 to 311 (FETTKIS) the chain is on the extracellular side. The chain crosses the membrane as a helical span at residues 312–336 (PLFTIWGSLFAKANAVYNPIVYGIS). Lysine 323 carries the N6-(retinylidene)lysine modification. Over 337-378 (HPKYRAALFQKFPSLACTTEPTGADTMSTTTTVTEGNEKPAA) the chain is Cytoplasmic.

This sequence belongs to the G-protein coupled receptor 1 family. Opsin subfamily. In terms of processing, phosphorylated on some or all of the serine and threonine residues present in the C-terminal region.

The protein localises to the membrane. Functionally, visual pigments are the light-absorbing molecules that mediate vision. They consist of an apoprotein, opsin, covalently linked to cis-retinal. This Camponotus atriceps (Florida carpenter ant) protein is Rhodopsin.